The chain runs to 959 residues: Translation initiation factor IF-2 (959 aa).

Positions 33–373 (SHASSVEEAD…PVTERKFHEL (341 aa)) are disordered. Over residues 46 to 60 (IASSFSAGVTKNVQA) the composition is skewed to polar residues. Positions 63–73 (AKDKQVAEQKA) are enriched in basic and acidic residues. Positions 76-100 (AKATTPQPAASKAAEKPAAATQEAS) are enriched in low complexity. Composition is skewed to basic and acidic residues over residues 112-125 (FKAE…EQVA), 134-143 (SNDRKSDYRQ), and 179-192 (NDGH…DKNR). Positions 193–211 (SFNANSRQQDIGRQGQTQA) are enriched in polar residues. Basic and acidic residues-rich tracts occupy residues 234-258 (ARQR…RQEA) and 266-276 (QTEDKKHREAP). The segment covering 277-287 (AKATEPAEPVA) has biased composition (low complexity). Over residues 306-323 (NRPDKAHDRDHGLEDGQK) the composition is skewed to basic and acidic residues. Over residues 328 to 346 (SWNSQNQVRNQKNSNWNNN) the composition is skewed to low complexity. Residues 347-357 (KKNKKGKHHKN) are compositionally biased toward basic residues. In terms of domain architecture, tr-type G spans 460-629 (ERAPVVTIMG…LLVAEVEELK (170 aa)). Residues 469-476 (GHVDHGKT) are G1. 469-476 (GHVDHGKT) is a binding site for GTP. The G2 stretch occupies residues 494-498 (GITQH). The tract at residues 515 to 518 (DTPG) is G3. Residues 515–519 (DTPGH) and 569–572 (NKID) each bind GTP. A G4 region spans residues 569-572 (NKID). Residues 605-607 (SAK) are G5.

Belongs to the TRAFAC class translation factor GTPase superfamily. Classic translation factor GTPase family. IF-2 subfamily.

Its subcellular location is the cytoplasm. In terms of biological role, one of the essential components for the initiation of protein synthesis. Protects formylmethionyl-tRNA from spontaneous hydrolysis and promotes its binding to the 30S ribosomal subunits. Also involved in the hydrolysis of GTP during the formation of the 70S ribosomal complex. The protein is Translation initiation factor IF-2 of Streptococcus equi subsp. zooepidemicus (strain H70).